The sequence spans 932 residues: Protocadherin gamma-A6 (932 aa).

The N-terminal stretch at 1–29 is a signal peptide; that stretch reads MAPPQRHPQRSEQVLLLTLLGTLWGAAAA. 6 consecutive Cadherin domains span residues 30–133, 134–242, 243–347, 348–452, 453–562, and 570–682; these read QIRY…TPRF, LKEE…TPMF, TQPV…VPEV, VVTS…PPTF, PHSS…APEI, and DGST…EPSA. The Extracellular portion of the chain corresponds to 30-692; the sequence is QIRYSIPEEL…KPNDSDLTLY (663 aa). The N-linked (GlcNAc...) asparagine glycan is linked to Asn-81. 2 N-linked (GlcNAc...) asparagine glycosylation sites follow: Asn-419 and Asn-545. Asn-685 carries an N-linked (GlcNAc...) asparagine glycan. Residues 693-713 traverse the membrane as a helical segment; the sequence is LVVAVAAVSCVFLAFVIVLLA. Residues 714–932 are Cytoplasmic-facing; sequence LRLQRWHKSR…KKKSGKKEKK (219 aa). Disordered stretches follow at residues 804–841 and 902–932; these read PRQL…WPNN and ATLT…KEKK. Over residues 806–841 the composition is skewed to polar residues; the sequence is QLQQAPPNTDWRFSQAQRPGTSGSQNGDDTGTWPNN. The segment covering 922–932 has biased composition (basic residues); sequence NKKKSGKKEKK.

The protein resides in the cell membrane. In terms of biological role, potential calcium-dependent cell-adhesion protein. May be involved in the establishment and maintenance of specific neuronal connections in the brain. This Homo sapiens (Human) protein is Protocadherin gamma-A6 (PCDHGA6).